A 400-amino-acid polypeptide reads, in one-letter code: Inosine-5'-monophosphate dehydrogenase (400 aa).

The segment covering 96–116 (KNESTPDQNLDKESTDGKDTK) has biased composition (basic and acidic residues). The tract at residues 96–125 (KNESTPDQNLDKESTDGKDTKSNNNIDAYS) is disordered. NAD(+) is bound by residues aspartate 163 and 212 to 214 (GIG). K(+) is bound by residues glycine 214 and glycine 216. Serine 217 is an IMP binding site. K(+) is bound at residue cysteine 219. Cysteine 219 (thioimidate intermediate) is an active-site residue. IMP is bound by residues 252-254 (DGG), 275-276 (GS), and 299-303 (YRGMG). The Proton acceptor role is filled by arginine 315. Residue glutamate 329 participates in IMP binding. The K(+) site is built by glutamate 383, serine 384, and histidine 385.

It belongs to the IMPDH/GMPR family. In terms of assembly, homotetramer. Requires K(+) as cofactor.

The protein resides in the cytoplasm. The enzyme catalyses IMP + NAD(+) + H2O = XMP + NADH + H(+). It participates in purine metabolism; XMP biosynthesis via de novo pathway; XMP from IMP: step 1/1. With respect to regulation, mycophenolic acid (MPA) is a non-competitive inhibitor that prevents formation of the closed enzyme conformation by binding to the same site as the amobile flap. In contrast, mizoribine monophosphate (MZP) is a competitive inhibitor that induces the closed conformation. MPA is a potent inhibitor of mammalian IMPDHs but a poor inhibitor of the bacterial enzymes. MZP is a more potent inhibitor of bacterial IMPDH. Resistant to mycophenolic acid (MPA) inhibition. Catalyzes the conversion of inosine 5'-phosphate (IMP) to xanthosine 5'-phosphate (XMP), the first committed and rate-limiting step in the de novo synthesis of guanine nucleotides, and therefore plays an important role in the regulation of cell growth. The polypeptide is Inosine-5'-monophosphate dehydrogenase (Cryptosporidium parvum).